A 313-amino-acid chain; its full sequence is Synaptophysin (313 aa).

Residues 1-25 (MLLLADMDVVNQLVAGGQFRVVKEP) are Cytoplasmic-facing. Residues 21 to 227 (VVKEPLGFVK…NLWFVFKETG (207 aa)) enclose the MARVEL domain. A helical transmembrane segment spans residues 26–49 (LGFVKVLQWVFAIFAFATCGSYSG). At 50-106 (ELQLSVDCANKTKSDLNIEVEFEYPFRLHEVYFEAPTCQGDPKKIFLVGNYSSSAEF) the chain is on the vesicular side. An N-linked (GlcNAc...) asparagine glycan is attached at asparagine 59. A Phosphotyrosine modification is found at tyrosine 81. Residue asparagine 99 is glycosylated (N-linked (GlcNAc...) asparagine). Residues 107 to 130 (FVTVAVFAFLYSMGALATYIFLQN) traverse the membrane as a helical segment. The Cytoplasmic segment spans residues 131-137 (KYRENNK). The helical transmembrane segment at 138 to 161 (GPMLDFLATAVFAFMWLVSSSAWA) threads the bilayer. The Vesicular segment spans residues 162 to 199 (KGLSDVKMATDPENIIKGMHVCHQPGNTCKELRDPVTS). The chain crosses the membrane as a helical span at residues 200–223 (GLNTSVVFGFLNLVLWVGNLWFVF). Topologically, residues 224-313 (KETGWAAPFL…GAPTSFSNQM (90 aa)) are cytoplasmic. The interval 238 to 313 (GAPEKQPAPG…GAPTSFSNQM (76 aa)) is disordered. The segment covering 253-263 (AGYGQGPGGYG) has biased composition (gly residues). Residues 254–304 (GYGQGPGGYGPQDSYGPQGGYQPDYGQPASSGGGGYGPQGDYGQQGYGPQG) form a repeats, Gly/Tyr-rich region. Residues 264–283 (PQDSYGPQGGYQPDYGQPAS) are compositionally biased toward low complexity. The segment covering 284–302 (SGGGGYGPQGDYGQQGYGP) has biased composition (gly residues).

The protein belongs to the synaptophysin/synaptobrevin family. In terms of assembly, homohexamer or homotetramer. Interacts with SRCIN1. Interacts with VAMP2; the interaction is inhibited by interaction of VAPM2 with SEPT8. In terms of processing, ubiquitinated; mediated by SIAH1 or SIAH2 and leading to its subsequent proteasomal degradation. Post-translationally, phosphorylated by SRC. In terms of tissue distribution, characteristic of a type of small (30-80 nm) neurosecretory vesicles, including presynaptic vesicles, but also vesicles of various neuroendocrine cells of both neuronal and epithelial phenotype.

It localises to the cytoplasmic vesicle. The protein resides in the secretory vesicle. It is found in the synaptic vesicle membrane. Its subcellular location is the synapse. The protein localises to the synaptosome. Its function is as follows. Possibly involved in structural functions as organizing other membrane components or in targeting the vesicles to the plasma membrane. Involved in the regulation of short-term and long-term synaptic plasticity. The protein is Synaptophysin (SYP) of Bos taurus (Bovine).